Reading from the N-terminus, the 426-residue chain is MLLSKYFLPVLKEEPSEAQVTSHKLMLRSGMIRQQAAGIYTWLPLGLKVLKNIENIVRLNMNKAGALEVLMPCIQPAHLWMESGRFDNYGKEMLKFQDRHDNTLLFGPTNEDMITDIFRHNIKSYKDLPKNLYHIQWKFRDEIRPRFGVMRGREFLMKDAYSFDINEENAVKTYNQMYKAYINAFRDLGVFAIPVIADNGPIGGNLSHEFHIIAETGESTIYYDKKFKILKDNPDIDVEEIKSWYAAAEEKYEVNKLPISEQEITSSKGIEVGHIFYIGSKYSVNMNALINDEYGKLTPIEMSSYGIGISRLVAAIIEANCDEKGIIWPSSVAPFKVSLINLNIHDSKCVELAEMAYKELSDKNIEVLYDDTEARPGSKFATHDLIGSPHQIIIGPKKAANNIVELKDRKSGVIEDIEVGSLMSVL.

It belongs to the class-II aminoacyl-tRNA synthetase family. ProS type 2 subfamily. As to quaternary structure, homodimer.

It is found in the cytoplasm. It catalyses the reaction tRNA(Pro) + L-proline + ATP = L-prolyl-tRNA(Pro) + AMP + diphosphate. Functionally, catalyzes the attachment of proline to tRNA(Pro) in a two-step reaction: proline is first activated by ATP to form Pro-AMP and then transferred to the acceptor end of tRNA(Pro). The sequence is that of Proline--tRNA ligase from Rickettsia rickettsii (strain Iowa).